The following is an 89-amino-acid chain: HssA/B-like protein 22 (89 aa).

The protein belongs to the hssA/B family.

The sequence is that of HssA/B-like protein 22 (hssl22) from Dictyostelium discoideum (Social amoeba).